Consider the following 316-residue polypeptide: Pantothenate kinase (316 aa).

Glycine 95–serine 102 is a binding site for ATP.

Belongs to the prokaryotic pantothenate kinase family.

It is found in the cytoplasm. The catalysed reaction is (R)-pantothenate + ATP = (R)-4'-phosphopantothenate + ADP + H(+). It participates in cofactor biosynthesis; coenzyme A biosynthesis; CoA from (R)-pantothenate: step 1/5. In Enterobacter sp. (strain 638), this protein is Pantothenate kinase.